Here is a 592-residue protein sequence, read N- to C-terminus: Aspartate--tRNA(Asp/Asn) ligase (592 aa).

Residue E175 participates in L-aspartate binding. The tract at residues Q199–K202 is aspartate. R221 provides a ligand contact to L-aspartate. Residues R221 to E223 and Q230 contribute to the ATP site. H450 contacts L-aspartate. E483 lines the ATP pocket. R490 serves as a coordination point for L-aspartate. G535–R538 contributes to the ATP binding site.

The protein belongs to the class-II aminoacyl-tRNA synthetase family. Type 1 subfamily. Homodimer.

The protein localises to the cytoplasm. The enzyme catalyses tRNA(Asx) + L-aspartate + ATP = L-aspartyl-tRNA(Asx) + AMP + diphosphate. Functionally, aspartyl-tRNA synthetase with relaxed tRNA specificity since it is able to aspartylate not only its cognate tRNA(Asp) but also tRNA(Asn). Reaction proceeds in two steps: L-aspartate is first activated by ATP to form Asp-AMP and then transferred to the acceptor end of tRNA(Asp/Asn). The chain is Aspartate--tRNA(Asp/Asn) ligase from Acinetobacter baumannii (strain ATCC 17978 / DSM 105126 / CIP 53.77 / LMG 1025 / NCDC KC755 / 5377).